A 580-amino-acid chain; its full sequence is Glutamine--tRNA ligase (580 aa).

The 'HIGH' region motif lies at 51 to 61; that stretch reads PEPNGYLHIGH. ATP is bound by residues 52–54 and 58–64; these read EPN and HIGHAKS. Asp84 and Tyr233 together coordinate L-glutamine. ATP contacts are provided by residues Thr252 and 287-288; that span reads RL. The 'KMSKS' region motif lies at 294–298; sequence ITSKR.

This sequence belongs to the class-I aminoacyl-tRNA synthetase family. As to quaternary structure, monomer.

The protein resides in the cytoplasm. It carries out the reaction tRNA(Gln) + L-glutamine + ATP = L-glutaminyl-tRNA(Gln) + AMP + diphosphate. The sequence is that of Glutamine--tRNA ligase from Ralstonia nicotianae (strain ATCC BAA-1114 / GMI1000) (Ralstonia solanacearum).